A 317-amino-acid polypeptide reads, in one-letter code: Lipoyl synthase (317 aa).

Positions 1–22 (MVTVVNTLNRPRHPEKQNRPET) are disordered. Positions 12–22 (RHPEKQNRPET) are enriched in basic and acidic residues. Residues Cys-57, Cys-62, Cys-68, Cys-83, Cys-87, Cys-90, and Ser-296 each contribute to the [4Fe-4S] cluster site. The region spanning 69 to 285 (WEKKHATFMI…ETVAYAKGFL (217 aa)) is the Radical SAM core domain.

This sequence belongs to the radical SAM superfamily. Lipoyl synthase family. It depends on [4Fe-4S] cluster as a cofactor.

The protein localises to the cytoplasm. The enzyme catalyses [[Fe-S] cluster scaffold protein carrying a second [4Fe-4S](2+) cluster] + N(6)-octanoyl-L-lysyl-[protein] + 2 oxidized [2Fe-2S]-[ferredoxin] + 2 S-adenosyl-L-methionine + 4 H(+) = [[Fe-S] cluster scaffold protein] + N(6)-[(R)-dihydrolipoyl]-L-lysyl-[protein] + 4 Fe(3+) + 2 hydrogen sulfide + 2 5'-deoxyadenosine + 2 L-methionine + 2 reduced [2Fe-2S]-[ferredoxin]. It functions in the pathway protein modification; protein lipoylation via endogenous pathway; protein N(6)-(lipoyl)lysine from octanoyl-[acyl-carrier-protein]: step 2/2. In terms of biological role, catalyzes the radical-mediated insertion of two sulfur atoms into the C-6 and C-8 positions of the octanoyl moiety bound to the lipoyl domains of lipoate-dependent enzymes, thereby converting the octanoylated domains into lipoylated derivatives. This Azorhizobium caulinodans (strain ATCC 43989 / DSM 5975 / JCM 20966 / LMG 6465 / NBRC 14845 / NCIMB 13405 / ORS 571) protein is Lipoyl synthase.